The primary structure comprises 1218 residues: Chitin synthase 4 (1218 aa).

Disordered regions lie at residues 1–93 and 132–190; these read MAEP…PERN and TVSS…RRQK. Positions 14–34 are enriched in basic and acidic residues; it reads TRDKSHSPYRESPSRRLRDVE. A glycan (N-linked (GlcNAc...) asparagine) is linked at Asn-50. Polar residues-rich tracts occupy residues 71-80 and 133-142; these read SNPNPMSQSD and VSSGSTQQDT. The segment covering 175–190 has biased composition (basic and acidic residues); it reads RKDTRNLTEEEKRRQK. N-linked (GlcNAc...) asparagine glycosylation is present at Asn-180. The next 2 membrane-spanning stretches (helical) occupy residues 200–220 and 235–255; these read IWNIYCAVVTFWAPDCLLQCF and VGLISIILLIAAFVGFLTFGF. N-linked (GlcNAc...) asparagine glycosylation is found at Asn-365, Asn-404, and Asn-426. Residues 487-507 form a helical membrane-spanning segment; that stretch reads VVLYVSLVFILAIVAAKFFLA. 2 disordered regions span residues 548–570 and 582–606; these read PKITDPASTVTGSDGRTSKRGSM and YAVDRRSSRPPPTTMTSQSSNAKLL. Over residues 553–562 the composition is skewed to polar residues; sequence PASTVTGSDG. N-linked (GlcNAc...) asparagine glycans are attached at residues Asn-617, Asn-903, and Asn-1030. The next 3 membrane-spanning stretches (helical) occupy residues 1062–1082, 1087–1107, and 1115–1135; these read IGTLVLPAAISFTFYLIIISI, VPVIPLVLLALILGLPAILIV, and YILWMGIYLLSLPIWNFVLPA. Residues 1188 to 1218 are disordered; that stretch reads QANGSVWNQQPPTRPPSGYGSMHGFEPYRDY. A compositionally biased stretch (polar residues) spans 1189–1198; the sequence is ANGSVWNQQP. N-linked (GlcNAc...) asparagine glycosylation occurs at Asn-1190.

It belongs to the chitin synthase family. Class IV subfamily. In terms of processing, maximal activity requires trypsin activation, suggesting a zymogenic nature.

It localises to the cell membrane. The catalysed reaction is [(1-&gt;4)-N-acetyl-beta-D-glucosaminyl](n) + UDP-N-acetyl-alpha-D-glucosamine = [(1-&gt;4)-N-acetyl-beta-D-glucosaminyl](n+1) + UDP + H(+). Its activity is regulated as follows. Activity is stimulated by Mg(2+), and is more inhibited by polyoxin D than by nikkomycin. In terms of biological role, polymerizes chitin, a structural polymer of the cell wall and septum, by transferring the sugar moiety of UDP-GlcNAc to the non-reducing end of the growing chitin polymer. CHS4 synthesizes a large amount of chitin and appears to play a role in the process of cell separation. CHS4 is particularly well suited for functioning at the higher temperatures associated with its poorly characterized saprophic environment and with human infection. The polypeptide is Chitin synthase 4 (Exophiala dermatitidis (strain ATCC 34100 / CBS 525.76 / NIH/UT8656) (Black yeast)).